Reading from the N-terminus, the 319-residue chain is Phospho-N-acetylmuramoyl-pentapeptide-transferase (319 aa).

Helical transmembrane passes span 5–25 (LIPFISSFALTVIFLPLFIGF), 51–71 (TMGGVVFMLAGVISTLWVLIW), 79–99 (AWILIIAFLGYGIIGFLDDGI), 116–136 (LGQIIIAALIITLAFSDHFAF), 149–169 (SFLFSLFVLFWLVGFSNAVNL), 172–192 (GLDGLATGLSIIAYATYAWIA), 197–217 (NWVIVVFTLSVIGGLVGFFIF), 224–244 (IFMGDAGSLALGGGLATVSIF), 252–272 (LLIGIVFVLETLSVILQVISF), and 299–319 (VDIVFWIVGLIGSIIYLIIWG).

The protein belongs to the glycosyltransferase 4 family. MraY subfamily. Mg(2+) serves as cofactor.

The protein resides in the cell membrane. It carries out the reaction UDP-N-acetyl-alpha-D-muramoyl-L-alanyl-gamma-D-glutamyl-L-lysyl-D-alanyl-D-alanine + di-trans,octa-cis-undecaprenyl phosphate = Mur2Ac(oyl-L-Ala-gamma-D-Glu-L-Lys-D-Ala-D-Ala)-di-trans,octa-cis-undecaprenyl diphosphate + UMP. It participates in cell wall biogenesis; peptidoglycan biosynthesis. Its function is as follows. Catalyzes the initial step of the lipid cycle reactions in the biosynthesis of the cell wall peptidoglycan: transfers peptidoglycan precursor phospho-MurNAc-pentapeptide from UDP-MurNAc-pentapeptide onto the lipid carrier undecaprenyl phosphate, yielding undecaprenyl-pyrophosphoryl-MurNAc-pentapeptide, known as lipid I. The polypeptide is Phospho-N-acetylmuramoyl-pentapeptide-transferase (Lactobacillus johnsonii (strain CNCM I-12250 / La1 / NCC 533)).